Here is a 123-residue protein sequence, read N- to C-terminus: Protein Rev (123 aa).

A Phosphoserine; by host CK2 modification is found at Ser5. Residues 18–26 (IIKLLYQSS) form a homomultimerization region. The interval 25–50 (SSPCPNPRGSRQARKNRRRRWRARQR) is disordered. The Nuclear localization signal and RNA-binding (RRE) motif lies at 34-50 (SRQARKNRRRRWRARQR). Basic residues predominate over residues 35 to 49 (RQARKNRRRRWRARQ). The Nuclear export signal and binding to XPO1 signature appears at 73 to 84 (LQLPPIERLRLD). The interval 86 to 123 (SESCGTSGTQQPQGTETGVGGPQISVESSAVLGSGTKN) is disordered. Residues 88–101 (SCGTSGTQQPQGTE) are compositionally biased toward polar residues. The residue at position 92 (Ser92) is a Phosphoserine; by host.

The protein belongs to the HIV-1 REV protein family. Homomultimer; when bound to the RRE. Multimeric assembly is essential for activity and may involve XPO1. Binds to human KPNB1, XPO1, TNPO1, RANBP5 and IPO7. Interacts with the viral Integrase. Interacts with human KHDRBS1. Interacts with human NAP1; this interaction decreases Rev multimerization and stimulates its activity. Interacts with human DEAD-box helicases DDX3 and DDX24; these interactions may serve for viral RNA export to the cytoplasm and packaging, respectively. Interacts with human PSIP1; this interaction may inhibit HIV-1 DNA integration by promoting dissociation of the Integrase-LEDGF/p75 complex. Post-translationally, asymmetrically arginine dimethylated at one site by host PRMT6. Methylation impairs the RNA-binding activity and export of viral RNA from the nucleus to the cytoplasm. In terms of processing, phosphorylated by protein kinase CK2. Presence of, and maybe binding to the N-terminus of the regulatory beta subunit of CK2 is necessary for CK2-mediated Rev's phosphorylation.

The protein localises to the host nucleus. Its subcellular location is the host nucleolus. It localises to the host cytoplasm. In terms of biological role, escorts unspliced or incompletely spliced viral pre-mRNAs (late transcripts) out of the nucleus of infected cells. These pre-mRNAs carry a recognition sequence called Rev responsive element (RRE) located in the env gene, that is not present in fully spliced viral mRNAs (early transcripts). This function is essential since most viral proteins are translated from unspliced or partially spliced pre-mRNAs which cannot exit the nucleus by the pathway used by fully processed cellular mRNAs. Rev itself is translated from a fully spliced mRNA that readily exits the nucleus. Rev's nuclear localization signal (NLS) binds directly to KPNB1/Importin beta-1 without previous binding to KPNA1/Importin alpha-1. KPNB1 binds to the GDP bound form of RAN (Ran-GDP) and targets Rev to the nucleus. In the nucleus, the conversion from Ran-GDP to Ran-GTP dissociates Rev from KPNB1 and allows Rev's binding to the RRE in viral pre-mRNAs. Rev multimerization on the RRE via cooperative assembly exposes its nuclear export signal (NES) to the surface. Rev can then form a complex with XPO1/CRM1 and Ran-GTP, leading to nuclear export of the complex. Conversion from Ran-GTP to Ran-GDP mediates dissociation of the Rev/RRE/XPO1/RAN complex, so that Rev can return to the nucleus for a subsequent round of export. Beside KPNB1, also seems to interact with TNPO1/Transportin-1, RANBP5/IPO5 and IPO7/RANBP7 for nuclear import. The nucleoporin-like HRB/RIP is an essential cofactor that probably indirectly interacts with Rev to release HIV RNAs from the perinuclear region to the cytoplasm. In Human immunodeficiency virus type 1 group M subtype A (isolate U455) (HIV-1), this protein is Protein Rev.